Consider the following 266-residue polypeptide: Phosphatidylglycerol--prolipoprotein diacylglyceryl transferase (266 aa).

The next 7 helical transmembrane spans lie at 10–30 (VALA…LIGI), 56–76 (LVFW…VLFY), 92–112 (WKGG…VWWF), 120–140 (FFQL…AGRI), 171–191 (PSQL…LWLF), 199–219 (ASVS…VEFV), and 233–253 (WLTM…ALMV). R139 lines the a 1,2-diacyl-sn-glycero-3-phospho-(1'-sn-glycerol) pocket.

It belongs to the Lgt family.

The protein localises to the cell inner membrane. The enzyme catalyses L-cysteinyl-[prolipoprotein] + a 1,2-diacyl-sn-glycero-3-phospho-(1'-sn-glycerol) = an S-1,2-diacyl-sn-glyceryl-L-cysteinyl-[prolipoprotein] + sn-glycerol 1-phosphate + H(+). The protein operates within protein modification; lipoprotein biosynthesis (diacylglyceryl transfer). Its function is as follows. Catalyzes the transfer of the diacylglyceryl group from phosphatidylglycerol to the sulfhydryl group of the N-terminal cysteine of a prolipoprotein, the first step in the formation of mature lipoproteins. This Pseudomonas paraeruginosa (strain DSM 24068 / PA7) (Pseudomonas aeruginosa (strain PA7)) protein is Phosphatidylglycerol--prolipoprotein diacylglyceryl transferase.